Consider the following 291-residue polypeptide: Protein US2 (291 aa).

Position 2 is an N-acetylglycine; by host (Gly2). The disordered stretch occupies residues 223–281 (NKPRPASSRPHPATHPTQRPCFTCMGRPEIPDEPSWQTGDDDPQNPGPPLAVGDEWPPS).

This sequence belongs to the herpesviridae HHV-1 US2 protein family. Interacts with host KRT18. Interacts with host MAP3K7; this interaction induces host NF-kappa-B pathway.

It is found in the virion. The protein localises to the host cytoplasm. The protein resides in the host cell surface. It localises to the host nucleus. Plays a role in the activation of the host NF-kappa-B pathway by interacting with and thus activating the component MAP3K7. This is Protein US2 from Human herpesvirus 2 (strain HG52) (HHV-2).